The following is a 498-amino-acid chain: MSDVASQIIELRPILPFAYARSQQILLLQRENDASLQTICVAQTPPAALLEARRIAGCSLRIERVTDEEFERQLVISYQRDSEEARRMMEDIGNEMDFYTLVEELPDSDDLLDADDDAPIIRLINAMLTEAIKNKASDIHIETYERYLLIRFRVDGVLREILRPQRKLASLLVSRIKVMAKLDIAEKRVPQDGRMALRVGGRAIDVRVSTLPSNYGERVVLRLLDKNSVKLDLELLGMSERNRQLLDSLIHRPHGIILVTGPTGSGKSTTLYAALSRLNASERNIMTVEDPIEYELEGIGQTQVNTKVDMTFARGLRAILRQDPDVVLVGEIRDGETAQIAVQASLTGHLVLSTLHTNSALGALSRLQDMGVEPFLLSTSLLGVLAQRLVRTLCSDCSQPQPVDPVQAEQMGIAPGTLLHNPVGCPQCSFTGYRGRIGIHELVLINDDVRAAIHRSDGEMAIAQILGGSRTTIRQDGLNKVLAGLTTWEEVIRVTKEE.

261–268 is an ATP binding site; the sequence is GPTGSGKS. Residues C394, C397, C425, and C428 each contribute to the Zn(2+) site.

Belongs to the GSP E family. In terms of assembly, forms homooligomers; most probably hexamers. Interacts with OutL/GspL. Zn(2+) is required as a cofactor.

The protein resides in the cell inner membrane. It catalyses the reaction ATP + H2O + cellular proteinSide 1 = ADP + phosphate + cellular proteinSide 2.. Functionally, ATPase component of the type II secretion system required for the energy-dependent secretion of extracellular factors such as proteases and toxins from the periplasm. Acts as a molecular motor to provide the energy that is required for assembly of the pseudopilus and the extrusion of substrates generated in the cytoplasm. The sequence is that of Type II secretion system protein E (outE) from Pectobacterium carotovorum subsp. carotovorum (Erwinia carotovora subsp. carotovora).